The sequence spans 479 residues: Protoheme IX farnesyltransferase (479 aa).

The unknown stretch occupies residues 1–207 (MAEQTATTTS…AYIRLTKPRL (207 aa)). The next 4 helical transmembrane spans lie at 20–40 (LLAGTAMGVYLLVLVGVTTAV), 64–84 (IGWLAVGHRVVAVIIGICAVV), 98–118 (VLITVAVGSFLYPIQAAVGAV), and 128–148 (LSVIHLIGGLSIFLTLAIALA). The segment covering 155-164 (TGDPTETQTT) has biased composition (low complexity). The tract at residues 155–186 (TGDPTETQTTPSKPEPDQDLPPASEYDPDLPA) is disordered. 9 helical membrane passes run 207-227 (LMWLLCLVASAGMTLGATTTG), 231-251 (PGIALATLGGGVLSIGASGTF), 271-291 (LATDLVPVWNAIAFGILLTVI), 303-322 (AAILGGVAIVFYSVVYTLLL), 324-344 (PNTVQNTVIGGAAGALPALIG), 345-365 (WVAVTGDIGFGGLALATVIFL), 402-422 (HVIWWLALTLVAAGGLATIEA), 423-443 (LGIVYAVASIVFGAVFLYFAI), and 459-479 (HASNAYLGAVLIAIVFDTLVI). The tract at residues 208 to 476 (MWLLCLVASA…AVLIAIVFDT (269 aa)) is protoheme IX prenyltransferase.

It in the C-terminal section; belongs to the UbiA prenyltransferase family. Protoheme IX farnesyltransferase subfamily.

Its subcellular location is the cell membrane. The catalysed reaction is heme b + (2E,6E)-farnesyl diphosphate + H2O = Fe(II)-heme o + diphosphate. Its pathway is porphyrin-containing compound metabolism; heme O biosynthesis; heme O from protoheme: step 1/1. Functionally, converts heme B (protoheme IX) to heme O by substitution of the vinyl group on carbon 2 of heme B porphyrin ring with a hydroxyethyl farnesyl side group. The sequence is that of Protoheme IX farnesyltransferase (ctaB) from Haloquadratum walsbyi (strain DSM 16790 / HBSQ001).